The primary structure comprises 244 residues: 5-oxoprolinase subunit A (244 aa).

The protein belongs to the LamB/PxpA family. Forms a complex composed of PxpA, PxpB and PxpC.

The enzyme catalyses 5-oxo-L-proline + ATP + 2 H2O = L-glutamate + ADP + phosphate + H(+). In terms of biological role, catalyzes the cleavage of 5-oxoproline to form L-glutamate coupled to the hydrolysis of ATP to ADP and inorganic phosphate. The polypeptide is 5-oxoprolinase subunit A (Shigella flexneri).